A 333-amino-acid polypeptide reads, in one-letter code: 2-oxoglutarate-dependent dioxygenase ucsF (333 aa).

The Fe2OG dioxygenase domain maps to 174–296; that stretch reads NASELRLNHY…RYSIAYLCKA (123 aa). His-202, Asp-204, and His-264 together coordinate Fe cation. Arg-287 contacts 2-oxoglutarate.

Belongs to the iron/ascorbate-dependent oxidoreductase family. The cofactor is Fe(2+).

It functions in the pathway mycotoxin biosynthesis. 2-oxoglutarate-dependent dioxygenase; part of the gene cluster that mediates the biosynthesis of UCS1025A, a member of the pyrrolizidinone family that acts as a strong telomerase inhibitor and displays potent antibacterial and antitumor properties. These compounds share a hemiaminal-containing pyrrolizidinone core fused with a gamma-lactone, giving a furopyrrolizidine that is connected to a decalin fragment. The polyketide synthase module (PKS) of the PKS-NRPS ucsA is responsible for the synthesis of the polyketide backbone via the condensation of an acetyl-CoA starter unit with 6 malonyl-CoA units. The downstream nonribosomal peptide synthetase (NRPS) module then amidates the carboxyl end of the polyketide with a 2S,3S-methylproline derived from L-isoleucine by the 2-oxoglutarate-dependent dioxygenase ucsF which converts L-isoleucine to (4S,5S)-4-methylpyrroline-5-carboxylate that is further converted to 2S,3S-methylproline by the pyrroline-5-carboxylate reductase ucsG. Reductive release of the completed aminoacyl polyketide from the assembly line can form the 3-pyrrolin-2-one structure via an intramolecular Knoevenagel reaction. Because ucsA lacks a designated enoylreductase (ER) domain, the required activity is provided the enoyl reductase ucsL. This keto acyclic precursor is the substrate of the Diels-Alderase ucsH, that catalyzes the Diels-Alder cycloaddition. Oxidation of the 3S-methyl group to a carboxylate by the cytochrome P450 monooxygenase ucsK allows an oxa-Michael cyclization that might involve the reductase/dehydrogenase ucsI and which furnishes the furopyrrolizidine. The oxidase ucsJ likely plays a critical role in stereoselective reduction of the C5-C6 double bond to afford the required R-configured carboxylate group. Further enolization and oxidation at C5 by an unidentified enzyme affords the last intermediate that can undergo oxa-Michael cyclization to yield UCS1025A. This chain is 2-oxoglutarate-dependent dioxygenase ucsF, found in Acremonium sp.